Reading from the N-terminus, the 94-residue chain is Large ribosomal subunit protein uL23 (94 aa).

It belongs to the universal ribosomal protein uL23 family. In terms of assembly, part of the 50S ribosomal subunit. Contacts protein L29, and trigger factor when it is bound to the ribosome.

Its function is as follows. One of the early assembly proteins it binds 23S rRNA. One of the proteins that surrounds the polypeptide exit tunnel on the outside of the ribosome. Forms the main docking site for trigger factor binding to the ribosome. The polypeptide is Large ribosomal subunit protein uL23 (Listeria innocua serovar 6a (strain ATCC BAA-680 / CLIP 11262)).